Here is a 600-residue protein sequence, read N- to C-terminus: DDB1- and CUL4-associated factor 8-like protein 1 (600 aa).

A disordered region spans residues 1–122 (MSHQEGSTGG…EEEQPRMCPR (122 aa)). Composition is skewed to acidic residues over residues 74 to 83 (SSSEDVELES) and 96 to 115 (EETE…EEEE). WD repeat units lie at residues 194-233 (SHAG…PVLN), 237-278 (GHDI…YCEN), 284-324 (KHRG…PASK), 332-372 (DKKV…KKEN), 388-427 (DFPT…GAQY), 435-475 (RNND…IIQF), and 479-518 (DRGD…ATEL). The segment at 562-600 (PGWRDHGAEFPDEEELDESSSTSDTSEEEGQDRVQCIPS) is disordered.

It belongs to the WD repeat DCAF8 family.

This Homo sapiens (Human) protein is DDB1- and CUL4-associated factor 8-like protein 1 (DCAF8L1).